A 250-amino-acid chain; its full sequence is Anti-Pycsar protein Apyc1 (250 aa).

Residues 19 to 220 (YNNNALVKCN…AVQEMIMLMH (202 aa)) are beta-lactamase-like. Residues His-61, His-63, Asp-65, His-66, His-146, Asp-166, and His-220 each contribute to the Zn(2+) site.

The protein belongs to the anti-Pycsar protein Apyc1 family. As to quaternary structure, homodimer. Requires Zn(2+) as cofactor.

It carries out the reaction 3',5'-cyclic CMP + H2O = CMP + H(+). It catalyses the reaction 3',5'-cyclic UMP + H2O = UMP + H(+). Functionally, counteracts the endogenous Pycsar antiviral defense system. Phosphodiesterase that enables metal-dependent hydrolysis of host cyclic nucleotide Pycsar defense signals such as cCMP and cUMP. This chain is Anti-Pycsar protein Apyc1, found in Paenibacillus xerothermodurans.